A 363-amino-acid chain; its full sequence is MKESVIRKLEGLLERNEEVMALLGDASVISDQDRFRALSKEYAQLEDVVAGFKAYQQAQVDLDSAKEMLEEDDAEMREMAQEEMKAAKAKLEHLEDELQILLLPKDPDDDKNAFVEIRAGAGGDEAAIFAGDLFRMYSRYAEANRWQIEIMSCNEGEHGGFKEVIMKVSGDGVYGKLKFESGGHRVQRVPETESQGRVHTSAVTVVVLHEVPEAEAISINPADLKVDTFRSSGAGGQHVNKTDSAIRITHIPTGIVVECQDQRSQHKNRAQAMSVLAARIQALEDEKRRSAEESTRRSLVASGDRSERVRTYNFPQGRVSEHRINLTLYRLNEVMEGDLDAILLPLMQEHQADQLAALADEQG.

Residue Q237 is modified to N5-methylglutamine. Positions 286–296 are enriched in basic and acidic residues; it reads EKRRSAEESTR. The tract at residues 286–305 is disordered; the sequence is EKRRSAEESTRRSLVASGDR.

It belongs to the prokaryotic/mitochondrial release factor family. Post-translationally, methylated by PrmC. Methylation increases the termination efficiency of RF1.

The protein resides in the cytoplasm. Its function is as follows. Peptide chain release factor 1 directs the termination of translation in response to the peptide chain termination codons UAG and UAA. In Shewanella baltica (strain OS155 / ATCC BAA-1091), this protein is Peptide chain release factor 1.